The following is a 133-amino-acid chain: Small ribosomal subunit protein uS8 (133 aa).

It belongs to the universal ribosomal protein uS8 family. Part of the 30S ribosomal subunit. Contacts proteins S5 and S12.

Its function is as follows. One of the primary rRNA binding proteins, it binds directly to 16S rRNA central domain where it helps coordinate assembly of the platform of the 30S subunit. In Orientia tsutsugamushi (strain Boryong) (Rickettsia tsutsugamushi), this protein is Small ribosomal subunit protein uS8.